The following is a 307-amino-acid chain: Methionyl-tRNA formyltransferase (307 aa).

(6S)-5,6,7,8-tetrahydrofolate is bound at residue 110 to 113 (SLLP).

The protein belongs to the Fmt family.

The catalysed reaction is L-methionyl-tRNA(fMet) + (6R)-10-formyltetrahydrofolate = N-formyl-L-methionyl-tRNA(fMet) + (6S)-5,6,7,8-tetrahydrofolate + H(+). Attaches a formyl group to the free amino group of methionyl-tRNA(fMet). The formyl group appears to play a dual role in the initiator identity of N-formylmethionyl-tRNA by promoting its recognition by IF2 and preventing the misappropriation of this tRNA by the elongation apparatus. The protein is Methionyl-tRNA formyltransferase of Rhodococcus erythropolis (strain PR4 / NBRC 100887).